The chain runs to 248 residues: Triosephosphate isomerase (248 aa).

A substrate-binding site is contributed by 9–11 (NWK). His-94 serves as the catalytic Electrophile. Glu-166 functions as the Proton acceptor in the catalytic mechanism. Residues Gly-172, Ser-212, and 233 to 234 (GG) contribute to the substrate site.

Belongs to the triosephosphate isomerase family. In terms of assembly, homodimer.

It is found in the cytoplasm. The catalysed reaction is D-glyceraldehyde 3-phosphate = dihydroxyacetone phosphate. Its pathway is carbohydrate biosynthesis; gluconeogenesis. It participates in carbohydrate degradation; glycolysis; D-glyceraldehyde 3-phosphate from glycerone phosphate: step 1/1. Its function is as follows. Involved in the gluconeogenesis. Catalyzes stereospecifically the conversion of dihydroxyacetone phosphate (DHAP) to D-glyceraldehyde-3-phosphate (G3P). This chain is Triosephosphate isomerase, found in Clostridium botulinum (strain Eklund 17B / Type B).